Reading from the N-terminus, the 152-residue chain is Transcriptional regulator MraZ (152 aa).

2 SpoVT-AbrB domains span residues 5–52 and 81–124; these read VTSI…PLHE and ATEC…QDKQ.

It belongs to the MraZ family. Forms oligomers.

It localises to the cytoplasm. The protein localises to the nucleoid. The chain is Transcriptional regulator MraZ from Actinobacillus pleuropneumoniae serotype 3 (strain JL03).